Consider the following 1039-residue polypeptide: Translation initiation factor IF-2 (1039 aa).

2 disordered regions span residues 39-347 and 400-452; these read TISE…KWQE and ARPP…PEKV. The segment covering 103–125 has biased composition (polar residues); that stretch reads RNTTSNAPEASVANNQIASSEAN. The segment covering 157–176 has biased composition (low complexity); that stretch reads PQKPAAPEAEPEAQSQAPAK. 2 stretches are compositionally biased toward basic and acidic residues: residues 178–197 and 226–243; these read AVEK…ERQP and PILK…DQAK. Positions 408–423 are enriched in low complexity; sequence ARSASAATAAPISSPT. Residues 432-451 show a composition bias toward basic and acidic residues; it reads NNRDQNRRQETEVKRERPEK. In terms of domain architecture, tr-type G spans 533 to 706; it reads RRPPVVTIMG…LLVAEVGELS (174 aa). Residues 542 to 549 form a G1 region; that stretch reads GHVDHGKT. Residue 542-549 coordinates GTP; that stretch reads GHVDHGKT. A G2 region spans residues 567 to 571; it reads GITQH. The segment at 592 to 595 is G3; the sequence is DTPG. GTP contacts are provided by residues 592–596 and 646–649; these read DTPGH and NKID. Residues 646 to 649 form a G4 region; it reads NKID. The G5 stretch occupies residues 682–684; the sequence is SAI.

This sequence belongs to the TRAFAC class translation factor GTPase superfamily. Classic translation factor GTPase family. IF-2 subfamily.

The protein resides in the cytoplasm. Its function is as follows. One of the essential components for the initiation of protein synthesis. Protects formylmethionyl-tRNA from spontaneous hydrolysis and promotes its binding to the 30S ribosomal subunits. Also involved in the hydrolysis of GTP during the formation of the 70S ribosomal complex. This chain is Translation initiation factor IF-2, found in Nostoc sp. (strain PCC 7120 / SAG 25.82 / UTEX 2576).